Reading from the N-terminus, the 332-residue chain is UDP-N-acetylenolpyruvoylglucosamine reductase (332 aa).

Residues 45–243 enclose the FAD-binding PCMH-type domain; that stretch reads RAGGHAAYFY…LGTRIKTQPL (199 aa). Residue Arg194 is part of the active site. The active-site Proton donor is Ser250. Residue Glu320 is part of the active site.

The protein belongs to the MurB family. It depends on FAD as a cofactor.

The protein localises to the cytoplasm. It catalyses the reaction UDP-N-acetyl-alpha-D-muramate + NADP(+) = UDP-N-acetyl-3-O-(1-carboxyvinyl)-alpha-D-glucosamine + NADPH + H(+). It functions in the pathway cell wall biogenesis; peptidoglycan biosynthesis. Its function is as follows. Cell wall formation. This is UDP-N-acetylenolpyruvoylglucosamine reductase from Nitrosomonas eutropha (strain DSM 101675 / C91 / Nm57).